Here is a 574-residue protein sequence, read N- to C-terminus: 2-succinyl-5-enolpyruvyl-6-hydroxy-3-cyclohexene-1-carboxylate synthase (574 aa).

The protein belongs to the TPP enzyme family. MenD subfamily. Homodimer. Requires Mg(2+) as cofactor. It depends on Mn(2+) as a cofactor. The cofactor is thiamine diphosphate.

It catalyses the reaction isochorismate + 2-oxoglutarate + H(+) = 5-enolpyruvoyl-6-hydroxy-2-succinyl-cyclohex-3-ene-1-carboxylate + CO2. It participates in quinol/quinone metabolism; 1,4-dihydroxy-2-naphthoate biosynthesis; 1,4-dihydroxy-2-naphthoate from chorismate: step 2/7. The protein operates within cofactor biosynthesis; phylloquinone biosynthesis. Its function is as follows. Catalyzes the thiamine diphosphate-dependent decarboxylation of 2-oxoglutarate and the subsequent addition of the resulting succinic semialdehyde-thiamine pyrophosphate anion to isochorismate to yield 2-succinyl-5-enolpyruvyl-6-hydroxy-3-cyclohexene-1-carboxylate (SEPHCHC). The sequence is that of 2-succinyl-5-enolpyruvyl-6-hydroxy-3-cyclohexene-1-carboxylate synthase from Prochlorococcus marinus (strain SARG / CCMP1375 / SS120).